A 1966-amino-acid chain; its full sequence is Histone-lysine N-methyltransferase SETD1B (1966 aa).

Over residues 1-12 the composition is skewed to basic residues; the sequence is MENSHPPHHHHQ. Residues 1 to 26 are disordered; sequence MENSHPPHHHHQQPPPQPGPSGERRN. Residues 68–98 are interaction with WDR82; that stretch reads VEDPRVVGIWTKNKELELSVPKFKIDEFYVG. In terms of domain architecture, RRM spans 93–181; sequence DEFYVGPVPP…NIIHVELDTK (89 aa). Disordered stretches follow at residues 235 to 302, 357 to 660, 675 to 719, 963 to 1462, 1501 to 1541, 1555 to 1606, and 1636 to 1668; these read GCGS…LFSQ, VGGT…PKPM, LAPT…PPPA, KVKR…SGPL, PPLL…RPPA, QPQT…KLPF, and AKSRGPWRRPPKKRHEDLVPPAGSPELSPPQPL. Composition is skewed to polar residues over residues 243–259, 265–274, and 282–300; these read VTPNSGGTPFSQDTAYS, TPNSYGQGTP, and PFSQDSSYSSRQPTPSYLF. Composition is skewed to pro residues over residues 432–441 and 449–458; these read PAPPPLPPAE and GTPPGPPPPD. The segment covering 493 to 521 has biased composition (basic and acidic residues); sequence EKPHDSLDSRIEMLLKEQRTKLLFLREPD. The segment covering 531 to 543 has biased composition (low complexity); that stretch reads SPISSSSSQLSPL. The span at 592-603 shows a compositional bias: pro residues; the sequence is PRPPPEPGPPDP. Residues 637–646 show a composition bias toward acidic residues; the sequence is EDMEISDDEM. Pro residues predominate over residues 679 to 719; the sequence is LPLPPPPGFPPLPPPPPPPPPQPGFPMPPPLPPPPPPPPPA. Residues Ser986 and Ser994 each carry the phosphoserine modification. The span at 995–1015 shows a compositional bias: basic and acidic residues; the sequence is ERERDRDMADTPCELAKRDPK. Ser1031 is subject to Phosphoserine. The span at 1041–1064 shows a compositional bias: low complexity; that stretch reads LSASSSSSASSSSGSSTTSPSSSA. Composition is skewed to acidic residues over residues 1067 to 1087 and 1104 to 1142; these read KEEEQESTEEEEEAEEEEEEE and KDDDDDDSDDRDESENDDEDTALSEASEKDEGDSDEEET. A compositionally biased stretch (low complexity) spans 1148-1174; sequence SKAEATSSSESSESSEFESSSESSPSS. The stretch at 1173 to 1204 forms a coiled coil; the sequence is SSSEDEEEVVAREEEEEEEEEEMVAEESMASA. Acidic residues-rich tracts occupy residues 1175–1197 and 1229–1238; these read SEDEEEVVAREEEEEEEEEEMVA and GMEEEVDIET. Residues Ser1265, Ser1283, and Ser1335 each carry the phosphoserine modification. Over residues 1312 to 1340 the composition is skewed to pro residues; it reads EPPMMLPLPLQPPLPPPRPPRPPSPPPEP. Residues 1383–1425 show a composition bias toward low complexity; the sequence is PGGEPPLSGGSSGLSLSSPQVPGSPFSYPAPSPSLSSGGLPRT. A compositionally biased stretch (pro residues) spans 1501–1514; the sequence is PPLLPAPLASCPPP. A compositionally biased stretch (basic residues) spans 1515–1524; sequence MKRKPGRPRR. The span at 1580–1600 shows a compositional bias: pro residues; it reads PAPPPPLPPQPPPPPPPPPVE. A phosphoserine mark is found at Ser1659 and Ser1663. The WDR5 interaction motif (WIN) motif lies at 1745–1750; it reads GCARSE. A disordered region spans residues 1767–1800; the sequence is SRASTDEPPADTQGMSIPAQPHASTRAGSERRSE. Residues 1798–1803 carry the RxxxRR motif motif; it reads RSEQRR. Positions 1827–1944 constitute an SET domain; that stretch reads KKLKFCKSHI…VNEEITYDYK (118 aa). Tyr1943 serves as a coordination point for S-adenosyl-L-methionine. A Post-SET domain is found at 1950–1966; the sequence is VKIPCLCGSENCRGTLN.

The protein belongs to the class V-like SAM-binding methyltransferase superfamily. As to quaternary structure, component of the SET1B/COMPASS complex composed of the catalytic subunit SETD1B, WDR5, WDR82, RBBP5, ASH2L/ASH2, CXXC1/CFP1, HCFC1, DPY30 homotrimer and BOD1. Forms a core complex with the evolutionary conserved subcomplex WRAD composed of WDR5, RBBP5, ASH2L/ASH2 and DPY30 subunits; WRAD differentially stimulates the methyltransferase activity. Interacts with HCFC1 and ASH2L/ASH2. Interacts (via N-terminal region) with WDR82. Interacts (via the RRM domain) with hyperphosphorylated C-terminal domain (CTD) of RNA polymerase II large subunit (POLR2A) only in the presence of WDR82. Binds specifically to CTD heptad repeats phosphorylated on 'Ser-5' of each heptad. Interacts with RBM15. Interacts (via WIN motif) with WDR5.

Its subcellular location is the nucleus. The protein localises to the nucleus speckle. The protein resides in the chromosome. It is found in the cytoplasm. The enzyme catalyses L-lysyl(4)-[histone H3] + S-adenosyl-L-methionine = N(6)-methyl-L-lysyl(4)-[histone H3] + S-adenosyl-L-homocysteine + H(+). It catalyses the reaction N(6)-methyl-L-lysyl(4)-[histone H3] + S-adenosyl-L-methionine = N(6),N(6)-dimethyl-L-lysyl(4)-[histone H3] + S-adenosyl-L-homocysteine + H(+). The catalysed reaction is N(6),N(6)-dimethyl-L-lysyl(4)-[histone H3] + S-adenosyl-L-methionine = N(6),N(6),N(6)-trimethyl-L-lysyl(4)-[histone H3] + S-adenosyl-L-homocysteine + H(+). In terms of biological role, histone methyltransferase that catalyzes methyl group transfer from S-adenosyl-L-methionine to the epsilon-amino group of 'Lys-4' of histone H3 (H3K4) via a non-processive mechanism. Part of chromatin remodeling machinery, forms H3K4me1, H3K4me2 and H3K4me3 methylation marks at active chromatin sites where transcription and DNA repair take place. Plays an essential role in regulating the transcriptional programming of multipotent hematopoietic progenitor cells and lymphoid lineage specification during hematopoiesis. This is Histone-lysine N-methyltransferase SETD1B (SETD1B) from Homo sapiens (Human).